Reading from the N-terminus, the 101-residue chain is Small ribosomal subunit protein uS17 (101 aa).

Belongs to the universal ribosomal protein uS17 family. Part of the 30S ribosomal subunit.

Functionally, one of the primary rRNA binding proteins, it binds specifically to the 5'-end of 16S ribosomal RNA. This is Small ribosomal subunit protein uS17 from Leifsonia xyli subsp. xyli (strain CTCB07).